Here is a 191-residue protein sequence, read N- to C-terminus: Protein NUCLEAR FUSION DEFECTIVE 2 (191 aa).

The N-terminal stretch at 1-29 is a signal peptide; that stretch reads MATLRFTLLLLVFVVGIFFSFSSVSHVRA. One can recognise an RNase III domain in the interval 48–167; that stretch reads LAKLQTQIGY…IFGAIAIDAG (120 aa).

Its function is as follows. Required for karyogamy during female gametophyte development, when the two polar nuclei fuse to form the diploid central cell nucleus. The protein is Protein NUCLEAR FUSION DEFECTIVE 2 of Arabidopsis thaliana (Mouse-ear cress).